The following is a 314-amino-acid chain: Hydroxyethylthiazole kinase (314 aa).

Substrate is bound at residue Met70. The ATP site is built by Arg145 and Ser217. Gly244 contacts substrate.

Belongs to the Thz kinase family. Mg(2+) serves as cofactor.

The catalysed reaction is 5-(2-hydroxyethyl)-4-methylthiazole + ATP = 4-methyl-5-(2-phosphooxyethyl)-thiazole + ADP + H(+). It functions in the pathway cofactor biosynthesis; thiamine diphosphate biosynthesis; 4-methyl-5-(2-phosphoethyl)-thiazole from 5-(2-hydroxyethyl)-4-methylthiazole: step 1/1. Functionally, catalyzes the phosphorylation of the hydroxyl group of 4-methyl-5-beta-hydroxyethylthiazole (THZ). This is Hydroxyethylthiazole kinase from Bifidobacterium longum (strain DJO10A).